We begin with the raw amino-acid sequence, 362 residues long: Acetylajmalan esterase 2 (362 aa).

The N-terminal stretch at 1 to 23 (MGFAARPFHIVFSLFVLAGATQA) is a signal peptide. Serine 38 functions as the Nucleophile in the catalytic mechanism. 4 N-linked (GlcNAc...) asparagine glycosylation sites follow: asparagine 100, asparagine 118, asparagine 151, and asparagine 202. Catalysis depends on residues aspartate 335 and histidine 338.

Belongs to the 'GDSL' lipolytic enzyme family. Confined to roots.

It catalyses the reaction 17-O-acetylnorajmaline + H2O = norajmaline + acetate + H(+). The enzyme catalyses 17-O-acetylajmaline + H2O = ajmaline + acetate + H(+). The protein operates within alkaloid biosynthesis; ajmaline biosynthesis. Functionally, acetylesterase involved in the biosynthesis of ajmaline-type monoterpenoid indole alkaloids (MIAs) natural products, important plant-derived pharmaceuticals used in the therapy of heart disorders. Deacetylates 17-O-acetylnorajmaline to produce norajmaline. May also catalyze the conversion of 17-O-acetylajmaline to ajmaline. This is Acetylajmalan esterase 2 from Rauvolfia serpentina (Serpentine wood).